The sequence spans 150 residues: Catabolic 3-dehydroquinase 1 (150 aa).

The active-site Proton acceptor is the Y24. Residues N75, H81, and D88 each coordinate substrate. The Proton donor role is filled by H101. Residues 102 to 103 and R112 each bind substrate; that span reads VS.

The protein belongs to the type-II 3-dehydroquinase family. In terms of assembly, homododecamer. Adopts a ring-like structure, composed of an arrangement of two hexameric rings stacked on top of one another.

It catalyses the reaction 3-dehydroquinate = 3-dehydroshikimate + H2O. It participates in aromatic compound metabolism; 3,4-dihydroxybenzoate biosynthesis; 3,4-dihydroxybenzoate from 3-dehydroquinate: step 1/2. Its function is as follows. Is involved in the catabolism of quinate. Allows the utilization of quinate as carbon source via the beta-ketoadipate pathway. The sequence is that of Catabolic 3-dehydroquinase 1 from Aspergillus fumigatus (strain ATCC MYA-4609 / CBS 101355 / FGSC A1100 / Af293) (Neosartorya fumigata).